The sequence spans 472 residues: Tubulin gamma chain (472 aa).

142 to 148 is a GTP binding site; the sequence is AGGTGSG.

It belongs to the tubulin family. In terms of assembly, component of the gamma-tubulin small complex (gamma-TuSC) composed of tubulin gamma chain, gamma-tubulin complex protein 2 (GCP2) and gamma-tubulin complex protein 3 (GCP3). Interacts with GCP2 and GCP3. Interacts with EB1.

The protein localises to the cytoplasm. It localises to the cytoskeleton. The protein resides in the flagellum axoneme. It is found in the flagellum basal body. Its subcellular location is the spindle. The protein localises to the microtubule organizing center. Functionally, tubulin is the major constituent of microtubules (Potential). The gamma chain is found at microtubule organizing centers (MTOC) such as the centrosome. Component of the gamma-tubulin small complex (gamma-TuSC) involved in microtubule nucleation for the formation of median bodies and in the biogenesis of flagella. Gamma-TuSC may be required for the correct positioning of EB1 within the trophozoites. The sequence is that of Tubulin gamma chain from Giardia intestinalis (strain ATCC 50803 / WB clone C6) (Giardia lamblia).